Here is a 548-residue protein sequence, read N- to C-terminus: Aromatic ammonia-lyase (548 aa).

The Proton donor/acceptor role is filled by tyrosine 55. The 5-imidazolinone (Ala-Gly) cross-link spans 144-146 (ASG). Serine 145 carries the 2,3-didehydroalanine (Ser) modification. Positions 200, 288, 294, 324, 396, 425, and 428 each coordinate (E)-cinnamate.

This sequence belongs to the PAL/histidase family. In terms of assembly, homotetramer. Contains an active site 4-methylidene-imidazol-5-one (MIO), which is formed autocatalytically by cyclization and dehydration of residues Ala-Ser-Gly.

The enzyme catalyses L-phenylalanine = (E)-cinnamate + NH4(+). It carries out the reaction L-tyrosine = (E)-4-coumarate + NH4(+). The catalysed reaction is 3,4-dimethoxy-L-phenylalanine = 3,4-dimethoxy-(E)-cinnamate + NH4(+). The protein operates within phenylpropanoid metabolism; trans-cinnamate biosynthesis; trans-cinnamate from L-phenylalanine: step 1/1. Aromatic ammonia-lyase (AAL) that shows reduced activity to catalyze the non-oxidative ammonia elimination from the canonical AAL substrates L-Phe and L-Tyr, contrasted by its pronounced efficiency towards substrates with electron-donor aromatic substituents such as 3,4-dimethoxy-L-phenylalanine. Is also able to catalyze the reverse reaction in vitro, i.e. the ammonia addition reaction to cinnamate derivatives, producing enantiopure phenylalanine derivatives. Shows no activity with L-His. The polypeptide is Aromatic ammonia-lyase (Loktanella atrilutea).